We begin with the raw amino-acid sequence, 257 residues long: RING-H2 finger protein ATL5 (257 aa).

Residues I28–S48 form a helical membrane-spanning segment. The RING-type; atypical zinc-finger motif lies at C113–R155. Positions E181–F209 are disordered. Residues A185–P206 are compositionally biased toward low complexity.

The protein belongs to the RING-type zinc finger family. ATL subfamily.

It localises to the membrane. The enzyme catalyses S-ubiquitinyl-[E2 ubiquitin-conjugating enzyme]-L-cysteine + [acceptor protein]-L-lysine = [E2 ubiquitin-conjugating enzyme]-L-cysteine + N(6)-ubiquitinyl-[acceptor protein]-L-lysine.. The protein operates within protein modification; protein ubiquitination. The protein is RING-H2 finger protein ATL5 (ATL5) of Arabidopsis thaliana (Mouse-ear cress).